A 376-amino-acid polypeptide reads, in one-letter code: Carbamoyl phosphate synthase small chain (376 aa).

Residues 1-187 (MKALLALEDG…KEDGSFLWKQ (187 aa)) are CPSase. Ser-45, Gly-239, and Gly-241 together coordinate L-glutamine. One can recognise a Glutamine amidotransferase type-1 domain in the interval 189 to 376 (KIPLIVYDYG…KEVVLLKLGC (188 aa)). Cys-266 serves as the catalytic Nucleophile. L-glutamine-binding residues include Leu-267, Gln-270, Asn-308, Gly-310, and Phe-311. Active-site residues include His-349 and Glu-351.

Belongs to the CarA family. As to quaternary structure, composed of two chains; the small (or glutamine) chain promotes the hydrolysis of glutamine to ammonia, which is used by the large (or ammonia) chain to synthesize carbamoyl phosphate. Tetramer of heterodimers (alpha,beta)4.

It carries out the reaction hydrogencarbonate + L-glutamine + 2 ATP + H2O = carbamoyl phosphate + L-glutamate + 2 ADP + phosphate + 2 H(+). The catalysed reaction is L-glutamine + H2O = L-glutamate + NH4(+). Its pathway is amino-acid biosynthesis; L-arginine biosynthesis; carbamoyl phosphate from bicarbonate: step 1/1. It participates in pyrimidine metabolism; UMP biosynthesis via de novo pathway; (S)-dihydroorotate from bicarbonate: step 1/3. Small subunit of the glutamine-dependent carbamoyl phosphate synthetase (CPSase). CPSase catalyzes the formation of carbamoyl phosphate from the ammonia moiety of glutamine, carbonate, and phosphate donated by ATP, constituting the first step of 2 biosynthetic pathways, one leading to arginine and/or urea and the other to pyrimidine nucleotides. The small subunit (glutamine amidotransferase) binds and cleaves glutamine to supply the large subunit with the substrate ammonia. The sequence is that of Carbamoyl phosphate synthase small chain from Lawsonia intracellularis (strain PHE/MN1-00).